The primary structure comprises 145 residues: MLIFLWCGAVCVSLLGAANIPPHPLNLINFMEMIRYTIPCEKTWGEYADYGCYCGAGGSGRPIDALDRCCYVHDNCYGDAEKKHKCNPKTQSYSYKLTKRTIICYGAAGTCGRIVCDCDRTAALCFGNSEYIEGHKNIDTARFCQ.

An N-terminal signal peptide occupies residues 1–17; it reads MLIFLWCGAVCVSLLGA. The propeptide occupies 18-25; that stretch reads ANIPPHPL. Cystine bridges form between Cys-52–Cys-144, Cys-54–Cys-70, Cys-76–Cys-118, Cys-86–Cys-111, and Cys-104–Cys-116. 3 residues coordinate Ca(2+): Tyr-53, Gly-55, and Gly-57. Residue His-73 is part of the active site. Asp-119 is a catalytic residue.

This sequence belongs to the phospholipase A2 family. Group I subfamily. G49 sub-subfamily. Heterodimer; disulfide-linked. The A chains have phospholipase A2 activity and the B chains show homology with the basic protease inhibitors. Requires Ca(2+) as cofactor. This enzyme lacks one of the seven disulfide bonds found in similar PLA2 proteins. In terms of tissue distribution, expressed by the venom gland.

It is found in the secreted. The catalysed reaction is a 1,2-diacyl-sn-glycero-3-phosphocholine + H2O = a 1-acyl-sn-glycero-3-phosphocholine + a fatty acid + H(+). Its function is as follows. Snake venom phospholipase A2 (PLA2) that inhibits neuromuscular transmission by blocking acetylcholine release from the nerve termini. PLA2 catalyzes the calcium-dependent hydrolysis of the 2-acyl groups in 3-sn-phosphoglycerides. The sequence is that of Basic phospholipase A2 beta-bungarotoxin A-AL1 chain from Bungarus multicinctus (Many-banded krait).